The sequence spans 212 residues: Placenta-specific protein 1 (212 aa).

The N-terminal stretch at Met-1 to Gly-22 is a signal peptide.

It belongs to the PLAC1 family. In terms of tissue distribution, expressed in placenta. Localizes primarily to differentiated syncytiotrophoblast throughout gestation as well as to a small population of villous cytotrophoblasts. Also detected in maternal blood and rapidly disappears following delivery, but is not detected in other adult or fetal tissues examined.

Its subcellular location is the secreted. May play a role in placental development. The protein is Placenta-specific protein 1 of Homo sapiens (Human).